The chain runs to 202 residues: Cutinase (202 aa).

Residues 1–20 form the signal peptide; sequence MKTSAQQLLSALLLPLSVLA. An intrachain disulfide couples C31 to C106. The active-site Nucleophile is the S117. Residues C165 and C172 are joined by a disulfide bond. Residue D169 is part of the active site. The Proton donor/acceptor role is filled by H182.

It belongs to the cutinase family. In terms of processing, the 2 disulfide bonds play a critical role in holding the catalytic residues in juxta-position; reduction of the disulfide bridges results in the complete inactivation of the enzyme.

The protein resides in the secreted. The catalysed reaction is cutin + H2O = cutin monomers.. Catalyzes the hydrolysis of complex carboxylic polyesters found in the cell wall of plants. Degrades cutin, a macromolecule that forms the structure of the plant cuticle. Allows pathogenic fungi to penetrate through the cuticular barrier into the host plant during the initial stage of fungal infection. The sequence is that of Cutinase from Botryotinia fuckeliana (Noble rot fungus).